We begin with the raw amino-acid sequence, 342 residues long: Nucleoid-associated protein Sfri_2491 (342 aa).

It belongs to the YejK family.

Its subcellular location is the cytoplasm. It is found in the nucleoid. The chain is Nucleoid-associated protein Sfri_2491 from Shewanella frigidimarina (strain NCIMB 400).